The primary structure comprises 217 residues: MGLGVAEREQIAKRAATEIKQGMIVNLGIGIPSLVPNFLKPDMQVMFQAENGVLGIGESPEKGEEDAHLCNAAGYPVRAVKGASYFDTTMSFAMIRKGKIDITILGALQVSQSGDLANWLVPGKKVPGMGGAMELAQKAKKVVVVMSHTDQKGRPKLTERCTLPLTAAGCVDLIITEKAVLEVDSHHFILKELMNGSTIDEVTRLTEAEIKIDMPFS.

E50 is an active-site residue.

It belongs to the 3-oxoacid CoA-transferase subunit B family. As to quaternary structure, heterodimer of a subunit alpha and a subunit beta.

This Bacillus subtilis (strain 168) protein is Probable coenzyme A transferase subunit beta (yodR).